A 171-amino-acid chain; its full sequence is 6,7-dimethyl-8-ribityllumazine synthase (171 aa).

Residues Phe30, 64-66 (ALE), and 88-90 (AVI) contribute to the 5-amino-6-(D-ribitylamino)uracil site. 93–94 (ET) serves as a coordination point for (2S)-2-hydroxy-3-oxobutyl phosphate. The active-site Proton donor is the His96. Residue Asn121 coordinates 5-amino-6-(D-ribitylamino)uracil. Arg135 provides a ligand contact to (2S)-2-hydroxy-3-oxobutyl phosphate.

It belongs to the DMRL synthase family.

It carries out the reaction (2S)-2-hydroxy-3-oxobutyl phosphate + 5-amino-6-(D-ribitylamino)uracil = 6,7-dimethyl-8-(1-D-ribityl)lumazine + phosphate + 2 H2O + H(+). It functions in the pathway cofactor biosynthesis; riboflavin biosynthesis; riboflavin from 2-hydroxy-3-oxobutyl phosphate and 5-amino-6-(D-ribitylamino)uracil: step 1/2. In terms of biological role, catalyzes the formation of 6,7-dimethyl-8-ribityllumazine by condensation of 5-amino-6-(D-ribitylamino)uracil with 3,4-dihydroxy-2-butanone 4-phosphate. This is the penultimate step in the biosynthesis of riboflavin. This Polynucleobacter necessarius subsp. necessarius (strain STIR1) protein is 6,7-dimethyl-8-ribityllumazine synthase.